The primary structure comprises 278 residues: Thiazole synthase (278 aa).

The active-site Schiff-base intermediate with DXP is the Lys-109. Residues Gly-170, 197–198 (AG), and 219–220 (NT) each bind 1-deoxy-D-xylulose 5-phosphate.

This sequence belongs to the ThiG family. As to quaternary structure, homotetramer. Forms heterodimers with either ThiH or ThiS.

The protein resides in the cytoplasm. The catalysed reaction is [ThiS sulfur-carrier protein]-C-terminal-Gly-aminoethanethioate + 2-iminoacetate + 1-deoxy-D-xylulose 5-phosphate = [ThiS sulfur-carrier protein]-C-terminal Gly-Gly + 2-[(2R,5Z)-2-carboxy-4-methylthiazol-5(2H)-ylidene]ethyl phosphate + 2 H2O + H(+). It functions in the pathway cofactor biosynthesis; thiamine diphosphate biosynthesis. Catalyzes the rearrangement of 1-deoxy-D-xylulose 5-phosphate (DXP) to produce the thiazole phosphate moiety of thiamine. Sulfur is provided by the thiocarboxylate moiety of the carrier protein ThiS. In vitro, sulfur can be provided by H(2)S. This is Thiazole synthase from Cupriavidus necator (strain ATCC 17699 / DSM 428 / KCTC 22496 / NCIMB 10442 / H16 / Stanier 337) (Ralstonia eutropha).